The primary structure comprises 300 residues: 2-oxoglutarate-dependent dioxygenase DAO (300 aa).

Residues 149–252 (WPCQFRMNRY…VSIAMFLLAP (104 aa)) form the Fe2OG dioxygenase domain. Fe cation is bound by residues His173, Asp175, and His232. Residue Arg242 participates in 2-oxoglutarate binding.

Belongs to the iron/ascorbate-dependent oxidoreductase family. Fe(2+) is required as a cofactor.

In terms of biological role, 2-oxoglutarate-dependent dioxygenase essential for auxin catabolism and maintenance of auxin homeostasis in reproductive organs. Catalyzes the irreversible oxidation of indole-3-acetic acid (IAA) to the biologically inactive 2-oxoindole-3-acetic acid (OxIAA). This Oryza sativa subsp. indica (Rice) protein is 2-oxoglutarate-dependent dioxygenase DAO (DAO).